The following is a 473-amino-acid chain: Ribosomal RNA small subunit methyltransferase F (473 aa).

S-adenosyl-L-methionine is bound by residues 123 to 129 (AAAPGSK), Glu-147, Asp-174, and Asp-192. Cys-245 (nucleophile) is an active-site residue.

This sequence belongs to the class I-like SAM-binding methyltransferase superfamily. RsmB/NOP family.

Its subcellular location is the cytoplasm. The enzyme catalyses cytidine(1407) in 16S rRNA + S-adenosyl-L-methionine = 5-methylcytidine(1407) in 16S rRNA + S-adenosyl-L-homocysteine + H(+). Functionally, specifically methylates the cytosine at position 1407 (m5C1407) of 16S rRNA. The polypeptide is Ribosomal RNA small subunit methyltransferase F (Vibrio atlanticus (strain LGP32) (Vibrio splendidus (strain Mel32))).